The following is a 602-amino-acid chain: 4-hydroxy-3-methylbut-2-en-1-yl diphosphate synthase (flavodoxin) (602 aa).

4 residues coordinate [4Fe-4S] cluster: Cys-508, Cys-511, Cys-543, and Glu-550.

The protein belongs to the IspG family. [4Fe-4S] cluster serves as cofactor.

The enzyme catalyses (2E)-4-hydroxy-3-methylbut-2-enyl diphosphate + oxidized [flavodoxin] + H2O + 2 H(+) = 2-C-methyl-D-erythritol 2,4-cyclic diphosphate + reduced [flavodoxin]. The protein operates within isoprenoid biosynthesis; isopentenyl diphosphate biosynthesis via DXP pathway; isopentenyl diphosphate from 1-deoxy-D-xylulose 5-phosphate: step 5/6. Converts 2C-methyl-D-erythritol 2,4-cyclodiphosphate (ME-2,4cPP) into 1-hydroxy-2-methyl-2-(E)-butenyl 4-diphosphate. This Chlamydia trachomatis serovar L2b (strain UCH-1/proctitis) protein is 4-hydroxy-3-methylbut-2-en-1-yl diphosphate synthase (flavodoxin).